Here is a 3637-residue protein sequence, read N- to C-terminus: Replicase polyprotein 1ab (3637 aa).

A C4-type; atypical zinc finger spans residues 8-28 (CLCTPNARVFWERGQVYCTRC). Positions 69-181 (ECRPGGMCWL…KGLCPFADAR (113 aa)) constitute a Peptidase C31 domain. A PCP1-alpha region spans residues 69–183 (ECRPGGMCWL…LCPFADARAN (115 aa)). Catalysis depends on for Nsp1-alpha papain-like cysteine proteinase activity residues C76 and H147. Positions 262 to 380 (RDTKFSKCWE…KFRFQTRKYY (119 aa)) are PCP1-beta. The Peptidase C32 domain occupies 262–381 (RDTKFSKCWE…FRFQTRKYYG (120 aa)). Catalysis depends on for Nsp1-beta papain-like cysteine proteinase activity residues C269 and H340. The 106-residue stretch at 381–486 (GYSPPGDGAC…RGVCGECEMG (106 aa)) folds into the Peptidase C33 domain. Residues C390 and H456 each act as for Nsp2 cysteine proteinase activity in the active site. Disordered regions lie at residues 676–743 (CKPK…AALK) and 865–899 (QQKT…GVSL). Basic residues predominate over residues 678–689 (PKRKRSRKKKTR). Basic and acidic residues-rich tracts occupy residues 714 to 727 (DTRE…KAEK) and 873 to 895 (GERE…KRDL). Helical transmembrane passes span 940–960 (WLNH…SFIF), 981–1001 (VLLC…CVFG), 1083–1103 (FYFL…AVAL), 1287–1307 (IADF…SAWL), 1362–1382 (ALMV…SLLV), 1390–1410 (CLLM…PFVL), and 1423–1443 (VQFF…VVLI). The interval 979-1103 (CCVLLCFYLP…LGLVFLAVAL (125 aa)) is HD1. The tract at residues 1287-1446 (IADFVCLGLY…ASVVVLISSW (160 aa)) is HD2. Residues 1511 to 1712 (GSLRTRGCAK…AVVESLPALE (202 aa)) form the Peptidase S32 domain. Residues H1549, D1574, and S1626 each act as charge relay system; for 3C-like serine proteinase activity in the active site. 5 helical membrane-spanning segments follow: residues 1735 to 1755 (DVPV…VMLA), 1761 to 1781 (FALS…AVAF), 1801 to 1821 (LVIA…LGQL), 1824 to 1844 (CCLM…LYLG), and 1853 to 1873 (EIFF…SLFK). Residues 1735–1872 (DVPVIRIAFF…MFLPLFLSLF (138 aa)) are HD3. The 159-residue stretch at 2214-2372 (SLNGLQQASA…LPYKLHPVRG (159 aa)) folds into the NiRAN domain. The RdRp catalytic domain maps to 2611–2745 (GRCLEADLAS…YDESSELPNY (135 aa)). In terms of domain architecture, AV ZBD spans 2865–2928 (KKKCRTCAHC…SPVMSLNTEL (64 aa)). 12 residues coordinate Zn(2+): C2871, C2874, C2884, C2889, H2892, H2894, H2896, H2898, C2905, H2907, C2914, and C2917. The (+)RNA virus helicase ATP-binding domain maps to 2985–3137 (QVMKVAQTCA…AFALMLGRQL (153 aa)). 3013 to 3020 (GAPGTGKT) provides a ligand contact to ATP. The (+)RNA virus helicase C-terminal domain maps to 3138 to 3269 (IEVFRFGPSI…CGEQPMMISE (132 aa)). Residues 3293 to 3389 (EGTASPLPQV…LTKFLKGKPV (97 aa)) enclose the AV-Nsp11N/CoV-Nsp15M domain. One can recognise a NendoU domain in the interval 3391–3513 (LPDSLMSTGR…MVWKDATAYF (123 aa)). Active-site residues include H3422, H3437, and K3466.

It belongs to the arteriviridae polyprotein family. Specific enzymatic cleavages in vivo by its own proteases yield mature proteins. There are two alternative pathways for processing. Either nsp4-5 is cleaved, which represents the major pathway or the nsp5-6 and nsp6-7 are processed, which represents the minor pathway. The major pathway occurs when nsp2 acts as a cofactor for nsp4.

It is found in the host membrane. The protein resides in the host cytoplasm. It localises to the host perinuclear region. The enzyme catalyses RNA(n) + a ribonucleoside 5'-triphosphate = RNA(n+1) + diphosphate. The catalysed reaction is ATP + H2O = ADP + phosphate + H(+). It carries out the reaction uridylyl-uridylyl-ribonucleotide-RNA = a 3'-end uridylyl-2',3'-cyclophospho-uridine-RNA + a 5'-end dephospho-ribonucleoside-RNA. Functionally, the replicase polyprotein 1ab is a multifunctional protein: it contains the activities necessary for the transcription of negative stranded RNA, leader RNA, subgenomic mRNAs and progeny virion RNA as well as proteinases responsible for the cleavage of the polyprotein into functional products. In terms of biological role, the Nsp1 chain is essential for viral subgenomic mRNA synthesis. Its function is as follows. The 3C-like serine proteinase chain is responsible for the majority of cleavages as it cleaves the C-terminus of the polyprotein. The helicase chain, which contains a zinc finger structure, displays RNA and DNA duplex-unwinding activities with 5' to 3' polarity. Functionally, plays a role in viral transcription/replication and prevents the simultaneous activation of host cell dsRNA sensors, such as MDA5/IFIH1, OAS, and PKR. Acts by degrading the 5'-polyuridines generated during replication of the poly(A) region of viral genomic and subgenomic RNAs. Catalyzes a two-step reaction in which a 2'3'-cyclic phosphate (2'3'-cP) is first generated by 2'-O transesterification, which is then hydrolyzed to a 3'-phosphate (3'-P). If not degraded, poly(U) RNA would hybridize with poly(A) RNA tails and activate host dsRNA sensors. This is Replicase polyprotein 1ab (rep) from Mus musculus domesticus (western European house mouse).